A 664-amino-acid chain; its full sequence is SPARC-like protein 1 (664 aa).

The N-terminal stretch at 1 to 16 (MKTGLFFLCLLGTAAA) is a signal peptide. Positions 25-34 (SDHSKPTAET) are O-glycosylated at one additional site. The segment at 28 to 360 (SKPTAETVAP…DGPRHSASDD (333 aa)) is disordered. O-linked (GalNAc...) threonine glycans are attached at residues T31 and T40. O-linked (GalNAc...) serine glycosylation occurs at S44. A compositionally biased stretch (basic and acidic residues) spans 62-84 (DDSHHKAEKSSVLKSKEESHEQS). Residues S76, S84, and S92 each carry the phosphoserine modification. Residues 85-94 (AEQGKSSSQE) show a composition bias toward polar residues. Over residues 96–105 (GLKDQEDSDG) the composition is skewed to basic and acidic residues. The O-linked (GalNAc...) threonine glycan is linked to T116. Positions 120–136 (LDIKEDMSEPQEKKLSE) are enriched in basic and acidic residues. Positions 146-156 (SSFTDSNQQES) are enriched in polar residues. N-linked (GlcNAc...) asparagine glycosylation occurs at N169. The segment covering 170–180 (YSHHQLNRSSK) has biased composition (basic residues). At S171 the chain carries Phosphoserine. Residues N176 and N196 are each glycosylated (N-linked (GlcNAc...) asparagine). Residues 188-199 (QGNQEQDPNISN) show a composition bias toward polar residues. Over residues 216–235 (DNQERKTELPREHANSKQEE) the composition is skewed to basic and acidic residues. Composition is skewed to acidic residues over residues 236-248 (DNTQ…EESD) and 259-280 (DEFD…EEEN). At S272 the chain carries Phosphoserine. N-linked (GlcNAc...) asparagine glycosylation is present at N280. Positions 306-316 (SNHKETEEKTV) are enriched in basic and acidic residues. T331 carries an O-linked (GalNAc...) threonine glycan. The segment covering 339-349 (DDGDDDGDDGG) has biased composition (acidic residues). Phosphoserine occurs at positions 358 and 365. Residues 388–426 (EKVHENENIGTTEPGEHQEAKKAENSSNEEETSSEGNMR) form a disordered region. An O-linked (GalNAc...) threonine glycan is attached at T398. Residues 401-411 (PGEHQEAKKAE) show a composition bias toward basic and acidic residues. A glycan (N-linked (GlcNAc...) asparagine) is linked at N412. The residue at position 420 (S420) is a Phosphoserine. A Follistatin-like domain is found at 432–454 (SCMSFQCKRGHICKADQQGKPHC). 7 disulfide bridges follow: C433/C444, C438/C454, C456/C490, C462/C483, C472/C509, C515/C626, and C634/C650. A Kazal-like domain is found at 450–511 (GKPHCVCQDP…QLDYFGACKS (62 aa)). A glycan (N-linked (GlcNAc...) asparagine) is linked at N476. The 36-residue stretch at 622–657 (PMEHCITRFFEECDPNKDKHITLKEWGHCFGIKEED) folds into the EF-hand domain. 5 residues coordinate Ca(2+): D635, N637, D639, H641, and E646.

This sequence belongs to the SPARC family. Post-translationally, N- and O-glycosylated. O-glycosylated with a core 1 or possibly core 8 glycan. In terms of tissue distribution, highly expressed in lymph node, brain, heart, lung, skeletal muscle, ovary, small intestine, and colon, with lower levels in placenta, pancreas, testis, spleen, and thymus, and no expression in kidney, liver, and peripheral blood leukocytes.

The protein resides in the secreted. It localises to the extracellular space. It is found in the extracellular matrix. This Homo sapiens (Human) protein is SPARC-like protein 1 (SPARCL1).